A 734-amino-acid polypeptide reads, in one-letter code: Meiotic driver SPOK1 (734 aa).

Residues 4-41 adopt a coiled-coil conformation; sequence KDRIAQLLRELEEAKARVEEAKAREAQERCEKERLQLE. 2 disordered regions span residues 180 to 222 and 414 to 499; these read ELTQ…ICSN and LSSA…MADP. Residues 416 to 429 show a composition bias toward polar residues; the sequence is SAPSSQNTDISEYT. Over residues 457–468 the composition is skewed to basic and acidic residues; the sequence is NEHDEHDEDHSE.

It localises to the cytoplasm. Its subcellular location is the nucleus. Its function is as follows. Promotes unequal transmission of alleles from the parental zygote to progeny spores by acting as poison/antidote system, leading to poisoning of progeny that do not inherit the allele. May possess DNA nuclease activity that leads to spore killing, and a kinase activity that confers resistance to the nuclease activity. Can suppress meiotic drive by the P.anserina SPOK2, SPOK3 and SPOK4 proteins. The polypeptide is Meiotic driver SPOK1 (Podospora comata).